Here is a 357-residue protein sequence, read N- to C-terminus: Metacaspase-3 (357 aa).

His-168 is an active-site residue. Positions 183, 199, and 200 each coordinate Ca(2+). Residue Cys-223 is part of the active site. Asp-230 is a binding site for Ca(2+).

This sequence belongs to the peptidase C14B family.

The protein resides in the recycling endosome. Its activity is regulated as follows. Activated by Ca(2+). Cysteine protease that cleaves specifically after arginine or lysine residues. In the bloodstream form, may cleave inactive metacaspase-4 MCA4 prior to MCA4 secretion. The sequence is that of Metacaspase-3 from Trypanosoma brucei brucei.